The following is a 368-amino-acid chain: MGSPHREAIRTARSVVVKVGTTALTTPSGVFDAGRLAELADAIESRMKAGTDVVIVSSGAIAAGIEPLGLSRRPKDLATKQAAASVGQVALVNSWSAAFARYGRTVGQVLLTAHDIAMRVQHTNAQRTLDRLRALHAVGIVNENDTVATNEIRFGDNDRLSALVAHLVGADALVLLSDIDGLYDADPRKFQNARFIPEVSGPADLDGVVAGQGSHLGTGGMASKMSSALLAADAGVPVLLAPAADAAAALTDASVGTVFAARSERMSARRFWVRYAAESAGSLTLDEGAVRAVVGHRRSLLPAGITAVAGKFFGGDVVDLCGPDATMVARGVVAYDATELAAMMGRSTSELPGELRRPAVHADDLVAV.

K18 contacts ATP. S58, D145, and N157 together coordinate substrate. ATP-binding positions include 177–178 (SD) and 218–224 (TGGMASK). One can recognise a PUA domain in the interval 280-358 (AGSLTLDEGA…SELPGELRRP (79 aa)).

Belongs to the glutamate 5-kinase family.

The protein resides in the cytoplasm. It catalyses the reaction L-glutamate + ATP = L-glutamyl 5-phosphate + ADP. It functions in the pathway amino-acid biosynthesis; L-proline biosynthesis; L-glutamate 5-semialdehyde from L-glutamate: step 1/2. Functionally, catalyzes the transfer of a phosphate group to glutamate to form L-glutamate 5-phosphate. The chain is Glutamate 5-kinase from Mycobacterium ulcerans (strain Agy99).